Reading from the N-terminus, the 224-residue chain is ATP phosphoribosyltransferase (224 aa).

The protein belongs to the ATP phosphoribosyltransferase family. Short subfamily. As to quaternary structure, heteromultimer composed of HisG and HisZ subunits.

It is found in the cytoplasm. It catalyses the reaction 1-(5-phospho-beta-D-ribosyl)-ATP + diphosphate = 5-phospho-alpha-D-ribose 1-diphosphate + ATP. It functions in the pathway amino-acid biosynthesis; L-histidine biosynthesis; L-histidine from 5-phospho-alpha-D-ribose 1-diphosphate: step 1/9. In terms of biological role, catalyzes the condensation of ATP and 5-phosphoribose 1-diphosphate to form N'-(5'-phosphoribosyl)-ATP (PR-ATP). Has a crucial role in the pathway because the rate of histidine biosynthesis seems to be controlled primarily by regulation of HisG enzymatic activity. The chain is ATP phosphoribosyltransferase from Cupriavidus taiwanensis (strain DSM 17343 / BCRC 17206 / CCUG 44338 / CIP 107171 / LMG 19424 / R1) (Ralstonia taiwanensis (strain LMG 19424)).